Consider the following 523-residue polypeptide: SWI/SNF and RSC complexes subunit arp9 (523 aa).

The segment covering isoleucine 56–threonine 72 has biased composition (basic and acidic residues). 2 disordered regions span residues isoleucine 56 to glycine 92 and glutamine 319 to valine 339. Residues glutamine 79–glycine 92 show a composition bias toward polar residues. Residues glutamine 319–asparagine 336 show a composition bias toward basic and acidic residues.

This sequence belongs to the actin family. As to quaternary structure, component of the RSC complex composed of at least arp9, arp42, rsc1, rsc4, rsc7, rsc9, rsc58, sfh1, snf21, ssr1, ssr2, ssr3 and ssr4. The complex interacts with histone and histone variant components of centromeric chromatin. Component of the SWI/SNF global transcription activator complex composed of at least arp9, arp42, snf5, snf22, snf30, sbf59, sol1, ssr1, ssr2, ssr3, ssr4 and tfg3.

It localises to the cytoplasm. The protein resides in the nucleus. Its function is as follows. Component of the chromatin structure remodeling complex (RSC), which is involved in transcription regulation and nucleosome positioning. Controls particularly membrane and organelle development genes. Part of the SWI/SNF complex, an ATP-dependent chromatin remodeling complex, required for the positive and negative regulation of gene expression of a large number of genes. It changes chromatin structure by altering DNA-histone contacts within a nucleosome, leading eventually to a change in nucleosome position, thus facilitating or repressing binding of gene-specific transcription factors. This is SWI/SNF and RSC complexes subunit arp9 (arp9) from Schizosaccharomyces pombe (strain 972 / ATCC 24843) (Fission yeast).